A 395-amino-acid chain; its full sequence is Protein hedgehog (395 aa).

A signal peptide spans 1–26 (MDNHSSVPWASAASVTCLSLDAKCHS). A compositionally biased stretch (low complexity) spans 26–43 (SSSSSCSSKSTASSISAS). The tract at residues 26 to 46 (SSSSSCSSKSTASSISASPET) is disordered. Positions 27–82 (SSSSCSSKSTASSISASPETQTMRHIAHTQRCLSRLTSLVALLLIVLPMMFSPAHS) are excised as a propeptide. Residue C83 is the site of N-palmitoyl cysteine attachment. Positions 147, 148, 153, 183, 184, 187, and 189 each coordinate Ca(2+). G255 carries Cholesterol glycine ester lipidation.

Belongs to the hedgehog family. Interacts with shf. The C-terminal part of the hedgehog protein precursor displays an autoproteolysis activity that results in the cleavage of the full-length protein into two parts (N-product and C-product). In addition, the C-terminal part displays a cholesterol transferase activity that results by the covalent attachment of a cholesterol moiety to the C-terminal of the newly generated N-product. The N-product is the active species in both local and long-range signaling, whereas the C-product has no signaling activity. In terms of processing, cholesterylation is required for N-product targeting to lipid rafts and multimerization. Post-translationally, N-palmitoylation by Rasp of the hedgehog N-product, within the secretory pathway, is required for the embryonic and larval patterning activities of the hedgehog signal.

Its subcellular location is the nucleus. It is found in the cytoplasm. The protein localises to the cell membrane. The catalysed reaction is glycyl-L-cysteinyl-[protein] + cholesterol + H(+) = [protein]-C-terminal glycyl cholesterol ester + N-terminal L-cysteinyl-[protein]. Its function is as follows. The C-terminal part of the hedgehog protein precursor displays an autoproteolysis activity that results in the cleavage of the full-length protein into two parts (N-product and C-product). In addition, the C-terminal part displays a cholesterol transferase activity that results by the covalent attachment of a cholesterol moiety to the C-terminal of the newly generated N-product. Once cleaved, the C-product has no signaling activity and diffuses from the cell. The dually lipidated hedgehog protein N-product is a morphogen which is essential for a variety of patterning events during development. Establishes the anterior-posterior axis of the embryonic segments and patterns the larval imaginal disks. Binds to the patched (ptc) receptor, which functions in association with smoothened (smo), to activate the transcription of target genes wingless (wg), decapentaplegic (dpp) and ptc. In the absence of hh, ptc represses the constitutive signaling activity of smo through fused (fu). Essential component of a signaling pathway which regulates the Duox-dependent gut immune response to bacterial uracil; required to activate Cad99C-dependent endosome formation, norpA-dependent Ca2+ mobilization and p38 MAPK, which are essential steps in the Duox-dependent production of reactive oxygen species (ROS) in response to intestinal bacterial infection. During photoreceptor differentiation, it up-regulates transcription of Ubr3, which in turn promotes the hh-signaling pathway by mediating the ubiquitination and degradation of cos. This chain is Protein hedgehog, found in Drosophila simulans (Fruit fly).